Here is a 275-residue protein sequence, read N- to C-terminus: tRNA pseudouridine synthase A (275 aa).

The active-site Nucleophile is aspartate 62. Tyrosine 124 serves as a coordination point for substrate.

This sequence belongs to the tRNA pseudouridine synthase TruA family. Homodimer.

The enzyme catalyses uridine(38/39/40) in tRNA = pseudouridine(38/39/40) in tRNA. Its function is as follows. Formation of pseudouridine at positions 38, 39 and 40 in the anticodon stem and loop of transfer RNAs. The chain is tRNA pseudouridine synthase A from Herminiimonas arsenicoxydans.